The primary structure comprises 196 residues: Nodulation protein A (196 aa).

This sequence belongs to the NodA family.

It localises to the cytoplasm. In terms of biological role, N-acyltransferase required for nodulation. Acts in the production of a small, heat-stable compound (Nod) that stimulates mitosis in various plant protoplasts. In Mesorhizobium plurifarium, this protein is Nodulation protein A.